A 133-amino-acid chain; its full sequence is Small ribosomal subunit protein uS8 (133 aa).

The protein belongs to the universal ribosomal protein uS8 family. As to quaternary structure, part of the 30S ribosomal subunit.

One of the primary rRNA binding proteins, it binds directly to 16S rRNA central domain where it helps coordinate assembly of the platform of the 30S subunit. The protein is Small ribosomal subunit protein uS8 of Hyperthermus butylicus (strain DSM 5456 / JCM 9403 / PLM1-5).